We begin with the raw amino-acid sequence, 396 residues long: Phosphoglycerate kinase (396 aa).

Residues 21–23 (DFN), arginine 37, 60–63 (HLGR), arginine 121, and arginine 154 contribute to the substrate site. ATP is bound by residues lysine 205, glycine 296, glutamate 327, and 353-356 (GGDS).

Belongs to the phosphoglycerate kinase family. Monomer.

The protein localises to the cytoplasm. It catalyses the reaction (2R)-3-phosphoglycerate + ATP = (2R)-3-phospho-glyceroyl phosphate + ADP. It functions in the pathway carbohydrate degradation; glycolysis; pyruvate from D-glyceraldehyde 3-phosphate: step 2/5. This chain is Phosphoglycerate kinase, found in Anaeromyxobacter dehalogenans (strain 2CP-C).